A 443-amino-acid chain; its full sequence is Probable D-serine dehydratase (443 aa).

Lys-116 is modified (N6-(pyridoxal phosphate)lysine).

It belongs to the serine/threonine dehydratase family. DsdA subfamily. Pyridoxal 5'-phosphate is required as a cofactor.

It catalyses the reaction D-serine = pyruvate + NH4(+). This is Probable D-serine dehydratase from Bacillus cereus (strain G9842).